Consider the following 239-residue polypeptide: Putative 3-methyladenine DNA glycosylase (239 aa).

The protein belongs to the DNA glycosylase MPG family.

The sequence is that of Putative 3-methyladenine DNA glycosylase from Pseudomonas aeruginosa (strain ATCC 15692 / DSM 22644 / CIP 104116 / JCM 14847 / LMG 12228 / 1C / PRS 101 / PAO1).